The following is a 247-amino-acid chain: MKNKLLFKIFLSLSLALSVYSINDKIIEVSNTSLAADVKNFTDLDEATKWGNKLIKQAKYSSDDKIALYEYTKDSSKINGPLRLAGGDINKLDSTTQDKVRRLDSSISKSTTPESVYVYRLLNLDYLTSIVGFTNEDLYKLQQTNNGQYDENLVRKLNNVMNSRIYREDGYSSTQLVSGAAVGGRPIELRLELPKGTKAAYLNSKDLTAYYGQQEVLLPRGTEYAVGSVELSNDKKKIIITAIVFKK.

An N-terminal signal peptide occupies residues 1–35; the sequence is MKNKLLFKIFLSLSLALSVYSINDKIIEVSNTSLA. Positions 39-247 constitute a TR mART core domain; it reads KNFTDLDEAT…IIITAIVFKK (209 aa). Catalysis depends on residues Arg120, Ser173, and Glu215.

To ADP-ribosyltransferase C3 of Clostridium.

Its function is as follows. Inhibits terminal differentiation of cultured mouse keratinocytes. In culture, also inhibits the differentiation of human keratinocytes. Probable ADP-ribosyltransferase. The chain is Epidermal cell differentiation inhibitor from Staphylococcus aureus.